Reading from the N-terminus, the 325-residue chain is Putative carboxypeptidase YocD (325 aa).

S111 serves as the catalytic Nucleophile. Catalysis depends on charge relay system residues E228 and H296.

The protein belongs to the peptidase S66 family.

This is Putative carboxypeptidase YocD (yocD) from Bacillus subtilis (strain 168).